The primary structure comprises 201 residues: Nucleoid occlusion factor SlmA (201 aa).

Positions 14–75 constitute an HTH tetR-type domain; sequence KERQQQVLEV…ALIERIEMTL (62 aa). The H-T-H motif DNA-binding region spans 38-57; sequence TTERLSKAVGVSEGALYRYF.

The protein belongs to the nucleoid occlusion factor SlmA family. As to quaternary structure, homodimer. Interacts with FtsZ.

Its subcellular location is the cytoplasm. It is found in the nucleoid. Functionally, required for nucleoid occlusion (NO) phenomenon, which prevents Z-ring formation and cell division over the nucleoid. Acts as a DNA-associated cell division inhibitor that binds simultaneously chromosomal DNA and FtsZ, and disrupts the assembly of FtsZ polymers. SlmA-DNA-binding sequences (SBS) are dispersed on non-Ter regions of the chromosome, preventing FtsZ polymerization at these regions. This chain is Nucleoid occlusion factor SlmA, found in Glaesserella parasuis serovar 5 (strain SH0165) (Haemophilus parasuis).